Here is a 119-residue protein sequence, read N- to C-terminus: UPF0145 protein Ta0182 (119 aa).

This sequence belongs to the UPF0145 family.

This chain is UPF0145 protein Ta0182, found in Thermoplasma acidophilum (strain ATCC 25905 / DSM 1728 / JCM 9062 / NBRC 15155 / AMRC-C165).